Consider the following 356-residue polypeptide: Holliday junction branch migration complex subunit RuvB (356 aa).

The tract at residues threonine 4–tyrosine 191 is large ATPase domain (RuvB-L). ATP-binding positions include leucine 30, arginine 31, glycine 72, lysine 75, threonine 76, threonine 77, glutamate 138 to tyrosine 140, arginine 181, tyrosine 191, and arginine 228. Residue threonine 76 participates in Mg(2+) binding. The tract at residues aspartate 192–aspartate 262 is small ATPAse domain (RuvB-S). Positions proline 265–lysine 356 are head domain (RuvB-H). Arginine 301, arginine 320, and arginine 325 together coordinate DNA.

It belongs to the RuvB family. In terms of assembly, homohexamer. Forms an RuvA(8)-RuvB(12)-Holliday junction (HJ) complex. HJ DNA is sandwiched between 2 RuvA tetramers; dsDNA enters through RuvA and exits via RuvB. An RuvB hexamer assembles on each DNA strand where it exits the tetramer. Each RuvB hexamer is contacted by two RuvA subunits (via domain III) on 2 adjacent RuvB subunits; this complex drives branch migration. In the full resolvosome a probable DNA-RuvA(4)-RuvB(12)-RuvC(2) complex forms which resolves the HJ.

The protein resides in the cytoplasm. The catalysed reaction is ATP + H2O = ADP + phosphate + H(+). In terms of biological role, the RuvA-RuvB-RuvC complex processes Holliday junction (HJ) DNA during genetic recombination and DNA repair, while the RuvA-RuvB complex plays an important role in the rescue of blocked DNA replication forks via replication fork reversal (RFR). RuvA specifically binds to HJ cruciform DNA, conferring on it an open structure. The RuvB hexamer acts as an ATP-dependent pump, pulling dsDNA into and through the RuvAB complex. RuvB forms 2 homohexamers on either side of HJ DNA bound by 1 or 2 RuvA tetramers; 4 subunits per hexamer contact DNA at a time. Coordinated motions by a converter formed by DNA-disengaged RuvB subunits stimulates ATP hydrolysis and nucleotide exchange. Immobilization of the converter enables RuvB to convert the ATP-contained energy into a lever motion, pulling 2 nucleotides of DNA out of the RuvA tetramer per ATP hydrolyzed, thus driving DNA branch migration. The RuvB motors rotate together with the DNA substrate, which together with the progressing nucleotide cycle form the mechanistic basis for DNA recombination by continuous HJ branch migration. Branch migration allows RuvC to scan DNA until it finds its consensus sequence, where it cleaves and resolves cruciform DNA. The polypeptide is Holliday junction branch migration complex subunit RuvB (Burkholderia cenocepacia (strain HI2424)).